Here is a 547-residue protein sequence, read N- to C-terminus: Undecaprenyl phosphate-alpha-4-amino-4-deoxy-L-arabinose arabinosyl transferase (547 aa).

A run of 10 helical transmembrane segments spans residues Phe-83 to Leu-103, Phe-111 to Val-131, Phe-174 to Ile-194, Phe-205 to His-225, Ala-253 to Leu-273, Ile-286 to Ile-306, Leu-311 to Val-331, Ala-346 to Ser-366, Gly-378 to Leu-398, and Ser-408 to Ile-428.

The protein belongs to the glycosyltransferase 83 family.

The protein resides in the cell inner membrane. It carries out the reaction 4-amino-4-deoxy-alpha-L-arabinopyranosyl di-trans,octa-cis-undecaprenyl phosphate + lipid IVA = lipid IIA + di-trans,octa-cis-undecaprenyl phosphate.. The protein operates within lipopolysaccharide metabolism; 4-amino-4-deoxy-beta-L-arabinose-lipid A biosynthesis. Catalyzes the transfer of the L-Ara4N moiety of the glycolipid undecaprenyl phosphate-alpha-L-Ara4N to lipid A. The modified arabinose is attached to lipid A and is required for resistance to polymyxin and cationic antimicrobial peptides. The chain is Undecaprenyl phosphate-alpha-4-amino-4-deoxy-L-arabinose arabinosyl transferase from Aeromonas hydrophila subsp. hydrophila (strain ATCC 7966 / DSM 30187 / BCRC 13018 / CCUG 14551 / JCM 1027 / KCTC 2358 / NCIMB 9240 / NCTC 8049).